Consider the following 469-residue polypeptide: 3-isopropylmalate dehydratase large subunit (469 aa).

Residues C347, C407, and C410 each contribute to the [4Fe-4S] cluster site.

The protein belongs to the aconitase/IPM isomerase family. LeuC type 1 subfamily. In terms of assembly, heterodimer of LeuC and LeuD. The cofactor is [4Fe-4S] cluster.

The catalysed reaction is (2R,3S)-3-isopropylmalate = (2S)-2-isopropylmalate. Its pathway is amino-acid biosynthesis; L-leucine biosynthesis; L-leucine from 3-methyl-2-oxobutanoate: step 2/4. In terms of biological role, catalyzes the isomerization between 2-isopropylmalate and 3-isopropylmalate, via the formation of 2-isopropylmaleate. The sequence is that of 3-isopropylmalate dehydratase large subunit from Sorangium cellulosum (strain So ce56) (Polyangium cellulosum (strain So ce56)).